Reading from the N-terminus, the 329-residue chain is Acetyl-coenzyme A carboxylase carboxyl transferase subunit alpha (329 aa).

In terms of domain architecture, CoA carboxyltransferase C-terminal spans glutamine 40–glutamate 294.

The protein belongs to the AccA family. In terms of assembly, acetyl-CoA carboxylase is a heterohexamer composed of biotin carboxyl carrier protein (AccB), biotin carboxylase (AccC) and two subunits each of ACCase subunit alpha (AccA) and ACCase subunit beta (AccD).

Its subcellular location is the cytoplasm. It carries out the reaction N(6)-carboxybiotinyl-L-lysyl-[protein] + acetyl-CoA = N(6)-biotinyl-L-lysyl-[protein] + malonyl-CoA. Its pathway is lipid metabolism; malonyl-CoA biosynthesis; malonyl-CoA from acetyl-CoA: step 1/1. In terms of biological role, component of the acetyl coenzyme A carboxylase (ACC) complex. First, biotin carboxylase catalyzes the carboxylation of biotin on its carrier protein (BCCP) and then the CO(2) group is transferred by the carboxyltransferase to acetyl-CoA to form malonyl-CoA. The chain is Acetyl-coenzyme A carboxylase carboxyl transferase subunit alpha from Prochlorococcus marinus (strain MIT 9313).